The sequence spans 531 residues: RNA-binding protein RO60 (531 aa).

The TROVE domain occupies 24–360 (VRNNAGGFVY…AFGNVQPANT (337 aa)). Residues 128–274 (RTGTMLLHFL…TNGLTWLLRN (147 aa)) form an RNA-binding region. A VWFA-like domain region spans residues 352-531 (FGNVQPANTR…VMTAFARGEV (180 aa)). Serine 369, serine 371, and threonine 438 together coordinate a divalent metal cation.

Belongs to the Ro 60 kDa family. Forms oligomers upon binding DrY RNA, The multimers are of an average size of 700 kDa and are composed of around 12 molecules of Rsr-DrY RNA.

It localises to the cytoplasm. Its function is as follows. Binds to several small RNAs that accumulate during recovery from UV irradiation. Contributes to the resistance of D.radiodurans to ultraviolet irradiation. The polypeptide is RNA-binding protein RO60 (Deinococcus radiodurans (strain ATCC 13939 / DSM 20539 / JCM 16871 / CCUG 27074 / LMG 4051 / NBRC 15346 / NCIMB 9279 / VKM B-1422 / R1)).